The sequence spans 1129 residues: MAPSQHPKSAAAPATTSDQMSTASSRPTNGTAHTSAETAYPSSMTDSKPTQSGPGSRASDEQDADEAYSNHSEQHMDHSNPDGHPSKPSGRKKKKKAKKGRAGSQTLGDESSTPLSTPSVSMSHPLPPPLPPHLGTRTILKSAKDRSIWNTSTQEERENIKTFWLELGEEERRQLVKVEKDAVLKKMKEQQKHSCSCTVCGRKRTAIEEELEVLYDAYYEELEQYANNNQGSFEKGSPIVPPPRLYQPPLRSPGQHTRTQGQFHPSRGRIHEITEDEEDLEEDYDDEEEDDDEPYSDDEFEDEETRAARADFFAFGNSLTVKDGILTVADDLLKNDGKHFIDMMEQLAERRMQREEDTQYNIAAAHQSLHSGHNHPPYDEEDYDDEEDEEYDSQEEDDYDEDEMDTMTEEQRMEEGRRMFQIFAARMFEQRVLTAYREKVAEQRQQKLIEELMEEQTRTEQKNAKKAREAEKRKEKKRLQKQAKEEEKARREAEKAAEEAAAKAEQEKKLEEQRRKREEQRKKREAERKAQEEERARKEAEKQRRLREERERQAEAERKHREQKEQEKKKREEARRKEREERELREKKAKEERERKAQEDQKKANQETPETKRTSHLGPVPIPANLQPQGSSSHLQSPHLQSASPAVPKAPTPAKARQPSQQGSHGSSPRSQQASTEPFHTSISPRSMAPSQSSGASSVASKQGYGQQPMLHHPQPSTPLSPLGSVNRSLPPGFASAGLPSNPPGLPGMVPRPPIGHELPTYPPHSGPLMNQLRGFPAPNGIPIPPGINGTRPLAPGRGFPLEAAPGLPFHTQQPIAGAFASHQGGMSHGHSRQPSGSFERSPLEPHAQPFPISRPSPIKRPPSTQQEQSDANRATQRDVDNLSAQLGSSALLDDTDIPFTSNLSQSLPGATAPGSLPGPTRASFGAPSLFPDPLASKPGGFPMGPGVGANTWGTQIPFVSSAFPGAPAWGTAHGSGWSNNAFGSGGHHRAHTSRPVAIRLLVIQACKQLDTMSSSKAGSGYHDVKIVLQQVEQLRPSNEPSIPLKEMLDICDTEGNTQNGGGSFSIKKDETGEFVKFEPDNNSAASGHRGSIVPGEIGSPVPSSSMPAFGGIGNTPSVLRQFSSPTGF.

5 disordered regions span residues M1–T136, N229–A307, N361–M413, M453–D879, and N903–S937. The segment covering A14 to P54 has biased composition (polar residues). Basic and acidic residues predominate over residues S72–P85. Residues S89–R101 show a composition bias toward basic residues. Polar residues-rich tracts occupy residues G103–M122 and G254–F263. Composition is skewed to acidic residues over residues T274–E304 and D379–T408. The stretch at A441–T608 forms a coiled coil. 2 stretches are compositionally biased toward basic and acidic residues: residues M453–R473 and Q482–R613. The segment covering L626–Q673 has biased composition (low complexity). Polar residues predominate over residues A674–P685. Residues S687–S701 show a composition bias toward low complexity. The segment covering T718 to R728 has biased composition (polar residues). A compositionally biased stretch (pro residues) spans S741–P754. Polar residues predominate over residues T865 to A875.

This sequence belongs to the NST1 family.

It localises to the cytoplasm. May act as a negative regulator of salt tolerance. The sequence is that of Stress response protein nst1 (nst1) from Aspergillus terreus (strain NIH 2624 / FGSC A1156).